The following is a 331-amino-acid chain: Biotin synthase (331 aa).

A Radical SAM core domain is found at 52 to 277 (PDVEVEGIIS…RTMLRFAGGR (226 aa)). 3 residues coordinate [4Fe-4S] cluster: cysteine 67, cysteine 71, and cysteine 74. [2Fe-2S] cluster contacts are provided by cysteine 110, cysteine 143, cysteine 202, and arginine 272.

The protein belongs to the radical SAM superfamily. Biotin synthase family. Homodimer. It depends on [4Fe-4S] cluster as a cofactor. Requires [2Fe-2S] cluster as cofactor.

It catalyses the reaction (4R,5S)-dethiobiotin + (sulfur carrier)-SH + 2 reduced [2Fe-2S]-[ferredoxin] + 2 S-adenosyl-L-methionine = (sulfur carrier)-H + biotin + 2 5'-deoxyadenosine + 2 L-methionine + 2 oxidized [2Fe-2S]-[ferredoxin]. It participates in cofactor biosynthesis; biotin biosynthesis; biotin from 7,8-diaminononanoate: step 2/2. Functionally, catalyzes the conversion of dethiobiotin (DTB) to biotin by the insertion of a sulfur atom into dethiobiotin via a radical-based mechanism. The chain is Biotin synthase from Mycolicibacterium gilvum (strain PYR-GCK) (Mycobacterium gilvum (strain PYR-GCK)).